A 403-amino-acid polypeptide reads, in one-letter code: MKFIDESLIRIEAGDGGNGCVSFRREKFIPKGGPDGGDGGDGGDVYLQADENLNTLIDYRFNKRFAAERGENGRSSDCTGRRGKDIILPVPVGTRAIDNDTKETLGDLTQHGQKMLVAKGGYHGLGNTRFKSSVNRAPRQKTMGTPGEKRDLLLELMLLADVGMLGFPNAGKSTFIRAVSAAKPKVADYPFTTLVPSLGVVKVDDSHSFVVADIPGLIEGAADGAGLGIRFLKHLERCRVLIHLVDIAPIDGSNPADNVAIIESELFQYSEKLSEKPRWLVFNKIDTMSDEEAEERVREITEQLGWEEDYYLISAATGKNVPPLCRDIMDFIIANPREAETQQVAPEEIKFKWEDYHQEQLAEYQFDDDEDWDDDWTEEDDDEDWDDDWSEEDDEGIEFIYKP.

An Obg domain is found at 1–159; it reads MKFIDESLIR…RDLLLELMLL (159 aa). The OBG-type G domain maps to 160-333; it reads ADVGMLGFPN…LCRDIMDFII (174 aa). GTP-binding positions include 166–173, 191–195, 213–216, 283–286, and 314–316; these read GFPNAGKS, FTTLV, DIPG, NKID, and SAA. Positions 173 and 193 each coordinate Mg(2+). A disordered region spans residues 364–403; it reads YQFDDDEDWDDDWTEEDDDEDWDDDWSEEDDEGIEFIYKP. Residues 365-397 are compositionally biased toward acidic residues; the sequence is QFDDDEDWDDDWTEEDDDEDWDDDWSEEDDEGI.

It belongs to the TRAFAC class OBG-HflX-like GTPase superfamily. OBG GTPase family. As to quaternary structure, monomer. It depends on Mg(2+) as a cofactor.

The protein resides in the cytoplasm. Its function is as follows. An essential GTPase which binds GTP, GDP and possibly (p)ppGpp with moderate affinity, with high nucleotide exchange rates and a fairly low GTP hydrolysis rate. Plays a role in control of the cell cycle, stress response, ribosome biogenesis and in those bacteria that undergo differentiation, in morphogenesis control. The sequence is that of GTPase Obg from Haemophilus influenzae (strain PittGG).